Reading from the N-terminus, the 183-residue chain is Glutathione-regulated potassium-efflux system ancillary protein KefG (183 aa).

Belongs to the NAD(P)H dehydrogenase (quinone) family. KefG subfamily. Interacts with KefB.

It is found in the cell inner membrane. It catalyses the reaction a quinone + NADH + H(+) = a quinol + NAD(+). The enzyme catalyses a quinone + NADPH + H(+) = a quinol + NADP(+). In terms of biological role, regulatory subunit of a potassium efflux system that confers protection against electrophiles. Required for full activity of KefB. This is Glutathione-regulated potassium-efflux system ancillary protein KefG from Pectobacterium atrosepticum (strain SCRI 1043 / ATCC BAA-672) (Erwinia carotovora subsp. atroseptica).